We begin with the raw amino-acid sequence, 378 residues long: MLLKNASFYDDEVLKRADIRLKDSLIIEIEENLSPTNNEEVVECEDLFVLPSFIDLSVTNLEGYENLKQKAFKGGVGLLNVFNGDQSGIKNIMAIKNNQLADIATLKNKGGEILIAPSDAFLELISHYAKSYNLPLLISLENSFEALNSGALAYELGQNFVDNAFENTRLVRFMEVSRALQIPVLLDKVNSIATLKLIKAFNDLGAKLQAQTPLSHLILDESVYEDYEPRFKIAPPLRDKEGQNALKEALKNNEIAMLTSLHASKNSNAQLFEESAFGCESIEDAFSVAYTFLVQKKVISFQQLIKVMTINQAKFLKLNAGEVKENQLANLMIVDLNAQTRVSNQNSPFYGLELYGEVQRMILKGQTTFIKENACKKS.

It belongs to the metallo-dependent hydrolases superfamily. DHOase family. PyrC' subfamily.

Its function is as follows. Non-functional DHOase. In Helicobacter pylori (strain J99 / ATCC 700824) (Campylobacter pylori J99), this protein is Probable dihydroorotase-like protein (pyrC').